The following is a 264-amino-acid chain: Thymidylate synthase (264 aa).

Arg-21 contributes to the dUMP binding site. (6R)-5,10-methylene-5,6,7,8-tetrahydrofolate is bound at residue His-51. 126-127 provides a ligand contact to dUMP; the sequence is RR. Cys-146 (nucleophile) is an active-site residue. DUMP-binding positions include 166 to 169, Asn-177, and 207 to 209; these read RSCD and HLY. A (6R)-5,10-methylene-5,6,7,8-tetrahydrofolate-binding site is contributed by Asp-169. Ser-263 serves as a coordination point for (6R)-5,10-methylene-5,6,7,8-tetrahydrofolate.

This sequence belongs to the thymidylate synthase family. Bacterial-type ThyA subfamily. Homodimer.

The protein localises to the cytoplasm. It catalyses the reaction dUMP + (6R)-5,10-methylene-5,6,7,8-tetrahydrofolate = 7,8-dihydrofolate + dTMP. The protein operates within pyrimidine metabolism; dTTP biosynthesis. Functionally, catalyzes the reductive methylation of 2'-deoxyuridine-5'-monophosphate (dUMP) to 2'-deoxythymidine-5'-monophosphate (dTMP) while utilizing 5,10-methylenetetrahydrofolate (mTHF) as the methyl donor and reductant in the reaction, yielding dihydrofolate (DHF) as a by-product. This enzymatic reaction provides an intracellular de novo source of dTMP, an essential precursor for DNA biosynthesis. In Buchnera aphidicola subsp. Schizaphis graminum (strain Sg), this protein is Thymidylate synthase.